The chain runs to 227 residues: Guanylate kinase (227 aa).

A Guanylate kinase-like domain is found at 21 to 199; that stretch reads GNLFMVVAPS…ALAELECIVA (179 aa). Position 28–35 (28–35) interacts with ATP; it reads APSGAGKS.

Belongs to the guanylate kinase family.

It is found in the cytoplasm. The catalysed reaction is GMP + ATP = GDP + ADP. Essential for recycling GMP and indirectly, cGMP. This Burkholderia lata (strain ATCC 17760 / DSM 23089 / LMG 22485 / NCIMB 9086 / R18194 / 383) protein is Guanylate kinase.